The sequence spans 166 residues: Large ribosomal subunit protein uL10 (166 aa).

It belongs to the universal ribosomal protein uL10 family. Part of the ribosomal stalk of the 50S ribosomal subunit. The N-terminus interacts with L11 and the large rRNA to form the base of the stalk. The C-terminus forms an elongated spine to which L12 dimers bind in a sequential fashion forming a multimeric L10(L12)X complex.

Its function is as follows. Forms part of the ribosomal stalk, playing a central role in the interaction of the ribosome with GTP-bound translation factors. The protein is Large ribosomal subunit protein uL10 of Alkaliphilus metalliredigens (strain QYMF).